An 81-amino-acid polypeptide reads, in one-letter code: Sec-independent protein translocase protein TatA (81 aa).

A helical membrane pass occupies residues 1 to 21; that stretch reads MGGISVWQLLIIAVIVVLLFG. The interval 42–81 is disordered; sequence AMSDEDSAKNEKDADFEPKSLEKQQQKEAAPETKKDKEQA.

Belongs to the TatA/E family. The Tat system comprises two distinct complexes: a TatABC complex, containing multiple copies of TatA, TatB and TatC subunits, and a separate TatA complex, containing only TatA subunits. Substrates initially bind to the TatABC complex, which probably triggers association of the separate TatA complex to form the active translocon.

The protein resides in the cell inner membrane. Part of the twin-arginine translocation (Tat) system that transports large folded proteins containing a characteristic twin-arginine motif in their signal peptide across membranes. TatA could form the protein-conducting channel of the Tat system. The protein is Sec-independent protein translocase protein TatA of Vibrio parahaemolyticus serotype O3:K6 (strain RIMD 2210633).